Reading from the N-terminus, the 223-residue chain is Deoxyribose-phosphate aldolase (223 aa).

Asp-91 serves as the catalytic Proton donor/acceptor. Lys-153 acts as the Schiff-base intermediate with acetaldehyde in catalysis. Lys-182 functions as the Proton donor/acceptor in the catalytic mechanism.

This sequence belongs to the DeoC/FbaB aldolase family. DeoC type 1 subfamily.

It is found in the cytoplasm. The enzyme catalyses 2-deoxy-D-ribose 5-phosphate = D-glyceraldehyde 3-phosphate + acetaldehyde. It functions in the pathway carbohydrate degradation; 2-deoxy-D-ribose 1-phosphate degradation; D-glyceraldehyde 3-phosphate and acetaldehyde from 2-deoxy-alpha-D-ribose 1-phosphate: step 2/2. Catalyzes a reversible aldol reaction between acetaldehyde and D-glyceraldehyde 3-phosphate to generate 2-deoxy-D-ribose 5-phosphate. The protein is Deoxyribose-phosphate aldolase of Yersinia enterocolitica serotype O:8 / biotype 1B (strain NCTC 13174 / 8081).